We begin with the raw amino-acid sequence, 210 residues long: Large ribosomal subunit protein uL3 (210 aa).

It belongs to the universal ribosomal protein uL3 family. Part of the 50S ribosomal subunit. Forms a cluster with proteins L14 and L19.

In terms of biological role, one of the primary rRNA binding proteins, it binds directly near the 3'-end of the 23S rRNA, where it nucleates assembly of the 50S subunit. This is Large ribosomal subunit protein uL3 from Amoebophilus asiaticus (strain 5a2).